The sequence spans 708 residues: Elongation factor G (708 aa).

One can recognise a tr-type G domain in the interval 9 to 289 (MFTRNIGIMA…AVCAFLPSPE (281 aa)). GTP-binding positions include 18-25 (AHIDAGKT), 86-90 (DTPGH), and 140-143 (NKMD).

It belongs to the TRAFAC class translation factor GTPase superfamily. Classic translation factor GTPase family. EF-G/EF-2 subfamily.

The protein localises to the cytoplasm. Functionally, catalyzes the GTP-dependent ribosomal translocation step during translation elongation. During this step, the ribosome changes from the pre-translocational (PRE) to the post-translocational (POST) state as the newly formed A-site-bound peptidyl-tRNA and P-site-bound deacylated tRNA move to the P and E sites, respectively. Catalyzes the coordinated movement of the two tRNA molecules, the mRNA and conformational changes in the ribosome. The sequence is that of Elongation factor G from Parabacteroides distasonis (strain ATCC 8503 / DSM 20701 / CIP 104284 / JCM 5825 / NCTC 11152).